The following is a 639-amino-acid chain: C-type lectin domain-containing protein 160 (639 aa).

Positions 1–19 (MDLKSWILLSCTLLPLSVT) are cleaved as a signal peptide. VWFA domains lie at 31–178 (DIII…VGIG) and 289–474 (DIIF…LCQV). The C-type lectin domain occupies 491–618 (KYGECFFPTK…WNSVSCTSEY (128 aa)). A disulfide bridge connects residues C594 and C614.

Its subcellular location is the secreted. The sequence is that of C-type lectin domain-containing protein 160 (clec-160) from Caenorhabditis elegans.